The chain runs to 273 residues: Nickel import ATP-binding protein NikE (273 aa).

Positions tyrosine 13–alanine 252 constitute an ABC transporter domain. Glycine 45–serine 52 lines the ATP pocket.

This sequence belongs to the ABC transporter superfamily. Nickel importer (TC 3.A.1.5.3) family. The complex is composed of two ATP-binding proteins (NikD and NikE), two transmembrane proteins (NikB and NikC) and a solute-binding protein (NikA).

Its subcellular location is the cell inner membrane. It carries out the reaction Ni(2+)(out) + ATP + H2O = Ni(2+)(in) + ADP + phosphate + H(+). In terms of biological role, part of the ABC transporter complex NikABCDE involved in nickel import. Responsible for energy coupling to the transport system. The protein is Nickel import ATP-binding protein NikE of Pseudomonas putida (strain ATCC 47054 / DSM 6125 / CFBP 8728 / NCIMB 11950 / KT2440).